A 666-amino-acid chain; its full sequence is MSDSHLTAFDKASKAGFIIALGIVYGDIGTSPLYTMQSLVENQGGVNQVSESFILGSISLIIWTLTLITTIKYVLIALKADNHHEGGIFSLFTLVRKMSPWLIIPAMIGGATLLSDGALTPAVTVTSAIEGLKAVPGLSHIYQNQTNVIITTLVILIVLFGIQRFGTGFIGKIFGPVMFIWFSFLGVSGFFNTLGHLEIFKAINPYYALHLLFSPENHRGIFILGSIFLATTGAEALYSDLGHVGRGNIYVSWPFVKVCIVLSYCGQAAWILANKHSGIELNPFFASVPSQLRVYLVSLATLAAIIASQALISGSFTLVSEAMRLKIFPLFRVTYPGANLGQLYIPVINWILFAVTSCTVLYFRTSAHMEAAYGLAITITMLMTTILLNYYLIKEGVKPFLAHLVMTFFALVEFIFFWASAVKFMHGGYVVVILALAIVFVMFIWHAGTRIVFKYVKSLNLNDYKEQIKQLRDDVCFDLYQTNVVYLSNRMQDYMIDRSILYSILDKRPKRARVYWFVNVQVTDEPYTAKYKVDMMGTDYMVRVNLYLGFRMPQTVPRYLRTIVQDLMESGRLPKQEQEYTITPGRDVGDFRFVLIEERVSNARQLSNFERFIMQTKASIKHVTASPMRWFGLQYSEVTLEVVPLILSDVLKLPIKELVPVEDSEA.

Transmembrane regions (helical) follow at residues 16 to 36 (GFII…LYTM), 58 to 78 (ISLI…LIAL), 100 to 120 (PWLI…GALT), 141 to 161 (IYQN…VLFG), 165 to 185 (FGTG…FSFL), 221 to 241 (IFIL…YSDL), 253 to 273 (WPFV…WILA), 294 to 314 (VYLV…LISG), 343 to 363 (LYIP…VLYF), 373 to 393 (YGLA…YYLI), 399 to 419 (PFLA…FFWA), and 424 to 444 (FMHG…VMFI).

Belongs to the HAK/KUP transporter (TC 2.A.72) family.

The protein localises to the cell membrane. It catalyses the reaction K(+)(in) + H(+)(in) = K(+)(out) + H(+)(out). In terms of biological role, transport of potassium into the cell. Likely operates as a K(+):H(+) symporter. The polypeptide is Probable potassium transport system protein Kup (Streptococcus pyogenes serotype M6 (strain ATCC BAA-946 / MGAS10394)).